Reading from the N-terminus, the 237-residue chain is Ubiquinone/menaquinone biosynthesis C-methyltransferase UbiE (237 aa).

Residues Thr-60 and Asp-80 each contribute to the S-adenosyl-L-methionine site.

Belongs to the class I-like SAM-binding methyltransferase superfamily. MenG/UbiE family.

It catalyses the reaction a 2-demethylmenaquinol + S-adenosyl-L-methionine = a menaquinol + S-adenosyl-L-homocysteine + H(+). The enzyme catalyses a 2-methoxy-6-(all-trans-polyprenyl)benzene-1,4-diol + S-adenosyl-L-methionine = a 5-methoxy-2-methyl-3-(all-trans-polyprenyl)benzene-1,4-diol + S-adenosyl-L-homocysteine + H(+). It functions in the pathway quinol/quinone metabolism; menaquinone biosynthesis; menaquinol from 1,4-dihydroxy-2-naphthoate: step 2/2. The protein operates within cofactor biosynthesis; ubiquinone biosynthesis. Functionally, methyltransferase required for the conversion of demethylmenaquinol (DMKH2) to menaquinol (MKH2) and the conversion of 2-polyprenyl-6-methoxy-1,4-benzoquinol (DDMQH2) to 2-polyprenyl-3-methyl-6-methoxy-1,4-benzoquinol (DMQH2). In Syntrophotalea carbinolica (strain DSM 2380 / NBRC 103641 / GraBd1) (Pelobacter carbinolicus), this protein is Ubiquinone/menaquinone biosynthesis C-methyltransferase UbiE.